Here is a 237-residue protein sequence, read N- to C-terminus: Ribosomal RNA small subunit methyltransferase G (237 aa).

S-adenosyl-L-methionine is bound by residues glycine 78, phenylalanine 83, 129–130, and arginine 148; that span reads AE. Residues 218-237 form a disordered region; the sequence is KKETPNKYPRKAGMPNKRPL.

It belongs to the methyltransferase superfamily. RNA methyltransferase RsmG family.

Its subcellular location is the cytoplasm. In terms of biological role, specifically methylates the N7 position of a guanine in 16S rRNA. This is Ribosomal RNA small subunit methyltransferase G from Streptococcus pneumoniae serotype 19F (strain G54).